Reading from the N-terminus, the 285-residue chain is MKKTLIALAIAASAASGMAHAWMTGDFNGSVDIGGSITADDYRQKWEWKVGTGLNGFGNVLNDLTNGGTKLTITVTGNKPILLGRTKEAFATPVTSGVDGIPHIAFTDYEGASVELRNPDGETEKGLAYFVLPMKNAEGTKVGSVKVNASYAGALGRGGVTSADGELMSLFAEGSHAIFYGGLPTNVKNSELKGGSAAAARTELFGSLSKNDILGQIQRVNANITSLVNVPGSFNENMAYTDGSVVSVAYALGIANGQTIEATFNQAVTTSTQWSAPLNVAITYY.

A signal peptide spans 1–21 (MKKTLIALAIAASAASGMAHA).

It belongs to the fimbrial K88 protein family. K88 fimbria, 0.1-1 micrometer in length and 7 nanometers in diameter, is composed of about 100 identical subunits.

Its subcellular location is the fimbrium. K88 major fimbrial subunit. Fimbriae (also called pili), are polar filaments radiating from the surface of the bacterium to a length of 0.5-1.5 micrometers and numbering 100-300 per cell. They enable bacteria to colonize the epithelium of specific host organs. This chain is K88 fimbrial protein AD (faeG), found in Escherichia coli.